Consider the following 363-residue polypeptide: Protein-arginine kinase (363 aa).

One can recognise a Phosphagen kinase C-terminal domain in the interval 24–255 (IVLSSRIRLA…QQLIAQERAA (232 aa)). Residues 27-31 (SSRIR), H92, R126, 177-181 (RASVM), and 208-213 (RGTYGE) each bind ATP. The RDXXRA motif of the pArg binding pocket involved in allosteric regulation motif lies at 338–343 (RDVRRA).

It belongs to the ATP:guanido phosphotransferase family.

It catalyses the reaction L-arginyl-[protein] + ATP = N(omega)-phospho-L-arginyl-[protein] + ADP + H(+). With respect to regulation, appears to be allosterically activated by the binding of pArg-containing polypeptides to the pArg-binding pocket localized in the C-terminal domain of McsB. Catalyzes the specific phosphorylation of arginine residues in a large number of proteins. Is part of the bacterial stress response system. Protein arginine phosphorylation has a physiologically important role and is involved in the regulation of many critical cellular processes, such as protein homeostasis, motility, competence, and stringent and stress responses, by regulating gene expression and protein activity. This Geobacillus kaustophilus (strain HTA426) protein is Protein-arginine kinase.